Reading from the N-terminus, the 296-residue chain is Nucleotide-binding protein SEQ_0857 (296 aa).

13–20 (GMSGAGKT) contributes to the ATP binding site. Residue 63-66 (DMRS) coordinates GTP.

The protein belongs to the RapZ-like family.

Its function is as follows. Displays ATPase and GTPase activities. In Streptococcus equi subsp. equi (strain 4047), this protein is Nucleotide-binding protein SEQ_0857.